Reading from the N-terminus, the 37-residue chain is Large ribosomal subunit protein bL36c (37 aa).

It belongs to the bacterial ribosomal protein bL36 family.

Its subcellular location is the plastid. It localises to the chloroplast. The chain is Large ribosomal subunit protein bL36c from Lepidium virginicum (Virginia pepperweed).